A 153-amino-acid chain; its full sequence is 6,7-dimethyl-8-ribityllumazine synthase (153 aa).

5-amino-6-(D-ribitylamino)uracil-binding positions include phenylalanine 22, alanine 56–glutamate 58, and threonine 80–isoleucine 82. Alanine 85–threonine 86 provides a ligand contact to (2S)-2-hydroxy-3-oxobutyl phosphate. The active-site Proton donor is the histidine 88. Phenylalanine 113 contacts 5-amino-6-(D-ribitylamino)uracil. Position 127 (arginine 127) interacts with (2S)-2-hydroxy-3-oxobutyl phosphate.

The protein belongs to the DMRL synthase family.

The catalysed reaction is (2S)-2-hydroxy-3-oxobutyl phosphate + 5-amino-6-(D-ribitylamino)uracil = 6,7-dimethyl-8-(1-D-ribityl)lumazine + phosphate + 2 H2O + H(+). Its pathway is cofactor biosynthesis; riboflavin biosynthesis; riboflavin from 2-hydroxy-3-oxobutyl phosphate and 5-amino-6-(D-ribitylamino)uracil: step 1/2. Functionally, catalyzes the formation of 6,7-dimethyl-8-ribityllumazine by condensation of 5-amino-6-(D-ribitylamino)uracil with 3,4-dihydroxy-2-butanone 4-phosphate. This is the penultimate step in the biosynthesis of riboflavin. This Clostridium perfringens (strain ATCC 13124 / DSM 756 / JCM 1290 / NCIMB 6125 / NCTC 8237 / Type A) protein is 6,7-dimethyl-8-ribityllumazine synthase.